Here is a 150-residue protein sequence, read N- to C-terminus: Large ribosomal subunit protein uL11 (150 aa).

The tract at residues 83–111 is disordered; that stretch reads AAGLKPQGKRNRAKGSEKPGRQTAGTVTA.

Belongs to the universal ribosomal protein uL11 family. As to quaternary structure, part of the ribosomal stalk of the 50S ribosomal subunit. Interacts with L10 and the large rRNA to form the base of the stalk. L10 forms an elongated spine to which L12 dimers bind in a sequential fashion forming a multimeric L10(L12)X complex. Post-translationally, one or more lysine residues are methylated.

Its function is as follows. Forms part of the ribosomal stalk which helps the ribosome interact with GTP-bound translation factors. This is Large ribosomal subunit protein uL11 from Paracoccus denitrificans (strain Pd 1222).